The primary structure comprises 698 residues: Endogenous retrovirus group K member 21 Env polyprotein (698 aa).

The interval 1-25 is disordered; the sequence is MHPSEMQRKAPPRRRRHRNRAPLTH. An N-terminal signal peptide occupies residues 1–88; sequence MHPSEMQRKA…ALMIVSMVVS (88 aa). Basic residues predominate over residues 10-20; that stretch reads APPRRRRHRNR. Residues 89-631 are Extracellular-facing; it reads LPMPAGAAAA…NLNPVTWVKT (543 aa). N-linked (GlcNAc...) asparagine glycosylation is found at asparagine 99, asparagine 127, asparagine 152, asparagine 273, asparagine 354, asparagine 371, and asparagine 460. Residues 465–485 are fusion peptide; it reads FIFTLIAVIMGLIAVTAMAAV. Asparagine 506, asparagine 553, asparagine 565, and asparagine 584 each carry an N-linked (GlcNAc...) asparagine glycan. The helical transmembrane segment at 632 to 652 threads the bilayer; the sequence is IGSTTIINLILILVCLFCLLL. At 653–698 the chain is on the cytoplasmic side; that stretch reads VCRCTQQLRRDSDHRERAMMTMVVLSKRKGGNVGKSKRDQIVTVSV.

The protein belongs to the beta type-B retroviral envelope protein family. HERV class-II K(HML-2) env subfamily. The surface (SU) and transmembrane (TM) proteins form a heterodimer. SU and TM are attached by noncovalent interactions or by a labile interchain disulfide bond. Specific enzymatic cleavages in vivo yield the mature SU and TM proteins.

The protein resides in the cell membrane. The protein localises to the virion. In terms of biological role, retroviral envelope proteins mediate receptor recognition and membrane fusion during early infection. Endogenous envelope proteins may have kept, lost or modified their original function during evolution. This endogenous envelope protein has lost its original fusogenic properties. Functionally, SU mediates receptor recognition. Its function is as follows. TM anchors the envelope heterodimer to the viral membrane through one transmembrane domain. The other hydrophobic domain, called fusion peptide, mediates fusion of the viral membrane with the target cell membrane. This chain is Endogenous retrovirus group K member 21 Env polyprotein (ERVK-21), found in Homo sapiens (Human).